The following is a 247-amino-acid chain: UPF0259 membrane protein BU276 (247 aa).

The next 6 membrane-spanning stretches (helical) occupy residues 20–40 (IGAIFFISIFATFMNILIDMF), 85–105 (IMESLISKTTLLGSIIILISV), 114–134 (IVSSIRTFFLFFPSLFILNFL), 137–157 (FIIQIGFMLLIIPGILLSIIL), 188–208 (IIGPGVLFWMCGKFILTMLLA), and 218–238 (LFLISNISMNILFSILIIYLF).

Belongs to the UPF0259 family.

The protein localises to the cell membrane. This is UPF0259 membrane protein BU276 from Buchnera aphidicola subsp. Acyrthosiphon pisum (strain APS) (Acyrthosiphon pisum symbiotic bacterium).